A 102-amino-acid polypeptide reads, in one-letter code: Putative defensin-like protein 152 (102 aa).

A signal peptide spans 1–29; that stretch reads MKKASQLSTTILTIFIVLAIGMMVKGTVG. Disulfide bonds link cysteine 34-cysteine 93, cysteine 51-cysteine 71, cysteine 56-cysteine 87, and cysteine 60-cysteine 89.

It belongs to the DEFL family.

The protein resides in the secreted. The sequence is that of Putative defensin-like protein 152 (LCR11) from Arabidopsis thaliana (Mouse-ear cress).